Consider the following 263-residue polypeptide: tRNA pseudouridine synthase A (263 aa).

The active-site Nucleophile is the aspartate 53. Residue tyrosine 111 coordinates substrate. The disordered stretch occupies residues 232–263; the sequence is TAPGHGLISGRSNMTNGKLENNKTTNPCVTKY. A compositionally biased stretch (polar residues) spans 241 to 263; sequence GRSNMTNGKLENNKTTNPCVTKY.

Belongs to the tRNA pseudouridine synthase TruA family. In terms of assembly, homodimer.

The enzyme catalyses uridine(38/39/40) in tRNA = pseudouridine(38/39/40) in tRNA. Formation of pseudouridine at positions 38, 39 and 40 in the anticodon stem and loop of transfer RNAs. In Halalkalibacterium halodurans (strain ATCC BAA-125 / DSM 18197 / FERM 7344 / JCM 9153 / C-125) (Bacillus halodurans), this protein is tRNA pseudouridine synthase A.